The primary structure comprises 474 residues: Vacuolar basic amino acid transporter 2 (474 aa).

Over Met1–Asn33 the chain is Cytoplasmic. A helical membrane pass occupies residues Cys34 to Asn54. The Vacuolar portion of the chain corresponds to Ile55–Arg62. Residues Ala63–Pro85 traverse the membrane as a helical segment. Topologically, residues Ser86 to Asn97 are cytoplasmic. A helical membrane pass occupies residues Leu98–Ile118. Residues Gly119 to Arg121 lie on the Vacuolar side of the membrane. Residues Trp122 to Val142 form a helical membrane-spanning segment. The Cytoplasmic portion of the chain corresponds to Pro143–Asp167. The helical transmembrane segment at Val168 to Gly188 threads the bilayer. Residues Cys189–Trp196 are Vacuolar-facing. A helical transmembrane segment spans residues Thr197–Leu217. Residues His218–Ser238 are Cytoplasmic-facing. The chain crosses the membrane as a helical span at residues Val239 to Leu259. Over Pro260 to Lys273 the chain is Vacuolar. Residues Ala274–Phe294 traverse the membrane as a helical segment. The Cytoplasmic segment spans residues Ser295–Arg303. Residues Leu304–Glu324 traverse the membrane as a helical segment. Over Lys325–Leu331 the chain is Vacuolar. A helical transmembrane segment spans residues Ile332–Phe352. The Cytoplasmic portion of the chain corresponds to Thr353–Ser375. A helical membrane pass occupies residues Ile376 to Leu396. At Leu397–His447 the chain is on the vacuolar side. N-linked (GlcNAc...) asparagine glycosylation is present at Asn420. The helical transmembrane segment at Leu448–Ala468 threads the bilayer. Residues Lys469–Arg474 lie on the Cytoplasmic side of the membrane.

Belongs to the major facilitator superfamily.

It is found in the vacuole membrane. Its function is as follows. Transporter required for vacuolar uptake of histidine, arginine and lysine and to a lesser extent tyrosine. This is Vacuolar basic amino acid transporter 2 (VBA2) from Saccharomyces cerevisiae (strain ATCC 204508 / S288c) (Baker's yeast).